Consider the following 151-residue polypeptide: 3-hydroxyacyl-[acyl-carrier-protein] dehydratase FabZ (151 aa).

H54 is an active-site residue.

This sequence belongs to the thioester dehydratase family. FabZ subfamily.

The protein resides in the cytoplasm. It catalyses the reaction a (3R)-hydroxyacyl-[ACP] = a (2E)-enoyl-[ACP] + H2O. In terms of biological role, involved in unsaturated fatty acids biosynthesis. Catalyzes the dehydration of short chain beta-hydroxyacyl-ACPs and long chain saturated and unsaturated beta-hydroxyacyl-ACPs. The sequence is that of 3-hydroxyacyl-[acyl-carrier-protein] dehydratase FabZ from Idiomarina loihiensis (strain ATCC BAA-735 / DSM 15497 / L2-TR).